Reading from the N-terminus, the 678-residue chain is MHLFFLTAVAFVITSVSVDASVAKDPRGHAPNRTEVDTVNASSSTRLLRKNSTVDLVGEERAPSIVENIKALVKSSAVTPAKLQQWLDERLPAGLVFKNMNLDEPNIFSLLHEPNFAKWVQYADDLSAKSSHKESSVISTLTSLHGDKVVYDTIQAAKLYPQLSELALKLEKDQIRFWIATRKDPSVVFEALNLNWAGISIFPKPEFSAWLKYVDDVNARHPKEAPLSIIPTLKQRFSRGDEAGTDVLLKLIANGKATTEAKTVANKVESALFDFWLNSRETPDKVMDAFKYGTTTQAFLGSPRWKEWERYLSAYNARYPEKKATAIETLTRKYGDAQLLDTLIGASSKGETKTLAAKLQAQQFDRWMNLKESPLDVYNRLRSSYGDTAFFNEPQLNVWVSYMNVFVDKNPSKVDKMFLELGDTFGDMRLFRVLGEAKKFPNLESTATKLQMEKASTLFASGKSPEGIFKVLALDNVGDDILSNTLFHKWLAYLQKFNKEHPNNQESWFDMLRISYQPFGVERIIETGRKNPLTRLMAEKVENAYHNYWLDIKMEPKTAFRSLHLDESGEKLLADPKFNTWVQYLKTFNDRYPNEKTTVIDGLRDNSHDIALLRMFSAAKNDPSTEKLATDLQSALILKWQDAKKTPEELKRVFVGVPAADEMLDRYIKLLAVASSTP.

Positions 1–20 (MHLFFLTAVAFVITSVSVDA) are cleaved as a signal peptide. A RxLR-dEER motif is present at residues 46–61 (RLLRKNSTVDLVGEER).

The protein belongs to the RxLR effector family.

The protein resides in the secreted. The protein localises to the host cytoplasm. Its function is as follows. Effector that enhances P.infestans colonization of Nicotiana benthamiana leaves. The sequence is that of RxLR effector protein PITG_16705 from Phytophthora infestans (strain T30-4) (Potato late blight agent).